The following is a 174-amino-acid chain: Nucleoside-triphosphatase THEP1 (174 aa).

ATP contacts are provided by residues 15–22 and 102–109; these read GMPGVGKT and LAIVDEIG.

Belongs to the THEP1 NTPase family.

It carries out the reaction a ribonucleoside 5'-triphosphate + H2O = a ribonucleoside 5'-diphosphate + phosphate + H(+). In terms of biological role, has nucleotide phosphatase activity towards ATP, GTP, CTP, TTP and UTP. May hydrolyze nucleoside diphosphates with lower efficiency. In Pyrobaculum islandicum (strain DSM 4184 / JCM 9189 / GEO3), this protein is Nucleoside-triphosphatase THEP1.